The chain runs to 241 residues: 7-cyano-7-deazaguanine synthase (241 aa).

An ATP-binding site is contributed by 15–25 (FSGGQDSTTTL). Zn(2+)-binding residues include Cys203, Cys218, Cys221, and Cys224.

Belongs to the QueC family. Requires Zn(2+) as cofactor.

It catalyses the reaction 7-carboxy-7-deazaguanine + NH4(+) + ATP = 7-cyano-7-deazaguanine + ADP + phosphate + H2O + H(+). The protein operates within purine metabolism; 7-cyano-7-deazaguanine biosynthesis. In terms of biological role, catalyzes the ATP-dependent conversion of 7-carboxy-7-deazaguanine (CDG) to 7-cyano-7-deazaguanine (preQ(0)). The protein is 7-cyano-7-deazaguanine synthase of Azorhizobium caulinodans (strain ATCC 43989 / DSM 5975 / JCM 20966 / LMG 6465 / NBRC 14845 / NCIMB 13405 / ORS 571).